The primary structure comprises 697 residues: Elongation factor G (697 aa).

The tr-type G domain maps to 8-290 (ERYRNIGISA…AVLDFLPSPV (283 aa)). GTP contacts are provided by residues 17–24 (AHIDAGKT), 88–92 (DTPGH), and 142–145 (NKMD).

It belongs to the TRAFAC class translation factor GTPase superfamily. Classic translation factor GTPase family. EF-G/EF-2 subfamily.

The protein resides in the cytoplasm. Functionally, catalyzes the GTP-dependent ribosomal translocation step during translation elongation. During this step, the ribosome changes from the pre-translocational (PRE) to the post-translocational (POST) state as the newly formed A-site-bound peptidyl-tRNA and P-site-bound deacylated tRNA move to the P and E sites, respectively. Catalyzes the coordinated movement of the two tRNA molecules, the mRNA and conformational changes in the ribosome. The polypeptide is Elongation factor G (Methylobacillus flagellatus (strain ATCC 51484 / DSM 6875 / VKM B-1610 / KT)).